Here is a 380-residue protein sequence, read N- to C-terminus: Cytochrome b (380 aa).

4 consecutive transmembrane segments (helical) span residues 33–53 (FGSLLGLCLITQILTGLFLAM), 77–98 (WLIRNIHANGASFFFICIYMHI), 113–133 (WNIGVVLLLLVMMTAFVGYVL), and 178–198 (FFAFHFLLPFIIAAATVIHLL). Positions 83 and 97 each coordinate heme b. Heme b is bound by residues His182 and His196. A ubiquinone is bound at residue His201. 4 consecutive transmembrane segments (helical) span residues 226-246 (YKDLLGFVIMLLALTLLALFS), 288-308 (LGGVLALLFSILVLMVVPLLH), 320-340 (ITQFLFWTLVADMIILTWIGG), and 347-367 (FIIIGQIASVLYFALFLVLFP).

Belongs to the cytochrome b family. The cytochrome bc1 complex contains 3 respiratory subunits (MT-CYB, CYC1 and UQCRFS1), 2 core proteins (UQCRC1 and UQCRC2) and probably 6 low-molecular weight proteins. Requires heme b as cofactor.

It localises to the mitochondrion inner membrane. Component of the ubiquinol-cytochrome c reductase complex (complex III or cytochrome b-c1 complex) that is part of the mitochondrial respiratory chain. The b-c1 complex mediates electron transfer from ubiquinol to cytochrome c. Contributes to the generation of a proton gradient across the mitochondrial membrane that is then used for ATP synthesis. The sequence is that of Cytochrome b (mt-cyb) from Carassius auratus (Goldfish).